Reading from the N-terminus, the 366-residue chain is MYFLVADHREHHVIPFLKTDFHHMHQNPIQKNQALLEIKQLFTGDYLICKSPSTILACIERKTYKDFAASLKDGRYKNRQKMLSLREQTNCQLYFFVEGPAFPNPQKKINHVAYASIITAMTHLMVRDHMFVIQTKNEAHSSQKLVQLFYAFSKEMVCVVPTSLTPTDEELCIKLWSSLSGISGVIGKILANTCSVAHLVSGKLPSQNIDQLKTPSNRPFPKKVKRMLISISKGNKELEIKLLSGVPNIGKKLAAEILKDHALLFFLNQPVECLANIQIAQKTRTIKLGMKRAEAIHYFLNWCGSAHVTVDSQNITEASRPTMQVATQPAATQPLHKVSDDASSDASSPTGHQTLSKEMSLNTVRC.

The region spanning 3 to 101 (FLVADHREHH…QLYFFVEGPA (99 aa)) is the ERCC4 domain. Composition is skewed to polar residues over residues 320–331 (RPTMQVATQPAA) and 349–366 (PTGHQTLSKEMSLNTVRC). Positions 320–366 (RPTMQVATQPAATQPLHKVSDDASSDASSPTGHQTLSKEMSLNTVRC) are disordered.

It belongs to the asfivirus EP364R family.

Plays a role in the inhibition of type I interferon signaling pathway. Mechanistically, specifically interacts with 2',3'-cGAMP and cleaves it via its phosphodiesterase activity. In turn, prevents 2',3'-cGAMP interaction with host ER-resident STING1 leading to inhibition of downstream signaling pathway and type I interferon production. The sequence is that of ERCC4 domain-containing protein EP364R from Ornithodoros (relapsing fever ticks).